The following is a 93-amino-acid chain: Conotoxin F_Vc1 (93 aa).

The first 22 residues, M1–A22, serve as a signal peptide directing secretion. A propeptide spanning residues E23 to R33 is cleaved from the precursor.

Belongs to the conotoxin F superfamily. In terms of processing, contains 4 disulfide bonds. As to expression, expressed by the venom duct.

The protein localises to the secreted. In Conus victoriae (Queen Victoria cone), this protein is Conotoxin F_Vc1.